The following is a 799-amino-acid chain: Cadherin-8 (799 aa).

Positions 1-29 (MPERLAETLMDLWTPLIILWITLPSCVYT) are cleaved as a signal peptide. A propeptide spanning residues 30 to 61 (APMNQAHVLTTGSPLELSRQSEDMRILSRSKR) is cleaved from the precursor. 5 Cadherin domains span residues 62–167 (GWVW…APEF), 168–276 (LNGP…PPKF), 277–391 (AQSL…PPVF), 392–494 (SSPT…DNAP), and 495–616 (EFAS…YVLP). Residues 62-621 (GWVWNQMFVL…AYVLPIGLSM (560 aa)) lie on the Extracellular side of the membrane. N-linked (GlcNAc...) asparagine glycosylation is present at asparagine 188. N-linked (GlcNAc...) asparagine glycosylation is found at asparagine 463, asparagine 473, and asparagine 544. Residues 622-642 (GALIAILACIILLLVIVVLFV) traverse the membrane as a helical segment. Topologically, residues 643–799 (TLRRHKNEPL…YSVGESDKET (157 aa)) are cytoplasmic. At serine 795 the chain carries Phosphoserine.

Its subcellular location is the cell membrane. Its function is as follows. Cadherins are calcium-dependent cell adhesion proteins. They preferentially interact with themselves in a homophilic manner in connecting cells; cadherins may thus contribute to the sorting of heterogeneous cell types. The chain is Cadherin-8 (Cdh8) from Mus musculus (Mouse).